The chain runs to 301 residues: 4-hydroxy-tetrahydrodipicolinate synthase (301 aa).

Pyruvate is bound at residue Thr50. Tyr138 serves as the catalytic Proton donor/acceptor. Residue Lys167 is the Schiff-base intermediate with substrate of the active site. Ile209 provides a ligand contact to pyruvate.

This sequence belongs to the DapA family. Homotetramer; dimer of dimers.

Its subcellular location is the cytoplasm. The catalysed reaction is L-aspartate 4-semialdehyde + pyruvate = (2S,4S)-4-hydroxy-2,3,4,5-tetrahydrodipicolinate + H2O + H(+). It participates in amino-acid biosynthesis; L-lysine biosynthesis via DAP pathway; (S)-tetrahydrodipicolinate from L-aspartate: step 3/4. In terms of biological role, catalyzes the condensation of (S)-aspartate-beta-semialdehyde [(S)-ASA] and pyruvate to 4-hydroxy-tetrahydrodipicolinate (HTPA). The polypeptide is 4-hydroxy-tetrahydrodipicolinate synthase (Sorangium cellulosum (strain So ce56) (Polyangium cellulosum (strain So ce56))).